A 355-amino-acid polypeptide reads, in one-letter code: uncharacterized protein (355 aa).

Disordered stretches follow at residues 1–121, 226–253, and 336–355; these read MPID…MELR, RLMN…KSSM, and NLHR…RKRT. Positions 24–37 are enriched in acidic residues; that stretch reads LESESSSESDYEEV. Residues 65–87 show a composition bias toward polar residues; sequence ETKTSSNFQNINPVQTIDNSASE. Low complexity predominate over residues 91–105; sequence DASSAEGGSNSAASS. A compositionally biased stretch (acidic residues) spans 106–117; the sequence is SEEEDSSDSEYE. Basic and acidic residues predominate over residues 226-245; sequence RLMNSEEREAQDLKDAEASR.

This is an uncharacterized protein from Schizosaccharomyces pombe (strain 972 / ATCC 24843) (Fission yeast).